The sequence spans 490 residues: GTPase Der (490 aa).

EngA-type G domains lie at Pro3–Leu166 and Ile203–Thr376. GTP contacts are provided by residues Gly9 to Ser16, Asp56 to Ile60, Asn118 to Asp121, Gly209 to Ser216, Asp256 to Val260, and Asn321 to Asp324. Residues Arg377 to Glu461 enclose the KH-like domain.

It belongs to the TRAFAC class TrmE-Era-EngA-EngB-Septin-like GTPase superfamily. EngA (Der) GTPase family. As to quaternary structure, associates with the 50S ribosomal subunit.

GTPase that plays an essential role in the late steps of ribosome biogenesis. In Escherichia coli O127:H6 (strain E2348/69 / EPEC), this protein is GTPase Der.